Here is a 371-residue protein sequence, read N- to C-terminus: Opsin, ultraviolet-sensitive (371 aa).

Over 1–52 (MSNDSIHWEARYLPAGPPRLLGWNVPAEELIHIPEHWLVYPEPNPSLHYLLA) the chain is Extracellular. N-linked (GlcNAc...) asparagine glycosylation occurs at asparagine 3. The chain crosses the membrane as a helical span at residues 53 to 73 (LLYILFTFLALLGNGLVIWIF). The Cytoplasmic portion of the chain corresponds to 74-84 (CAAKSLRTPSN). Residues 85–105 (MFVVNLAICDFFMMIKTPIFI) traverse the membrane as a helical segment. The Extracellular segment spans residues 106–121 (YNSFNTGFALGNLGCQ). A disulfide bond links cysteine 120 and cysteine 197. The chain crosses the membrane as a helical span at residues 122 to 142 (IFAVIGSLTGIGAAITNAAIA). Residues 143–161 (YDRYSTIARPLDGKLSRGQ) lie on the Cytoplasmic side of the membrane. The chain crosses the membrane as a helical span at residues 162–182 (VILFIVLIWTYTIPWALMPVM). Over 183–209 (GVWGRFVPEGFLTSCSFDYLTDTNEIR) the chain is Extracellular. Residues 210 to 230 (IFVATIFTFSYCIPMILIIYY) form a helical membrane-spanning segment. Over 231–278 (YSQIVSHVVNHEKALREQAKKMNVDSLRSNANTSSQSAEIRIAKAAIT) the chain is Cytoplasmic. The helical transmembrane segment at 279–299 (ICFLYVLSWTPYGVMSMIGAF) threads the bilayer. At 300–302 (GNK) the chain is on the extracellular side. The helical transmembrane segment at 303–323 (ALLTPGVTMIPACTCKAVACL) threads the bilayer. Lysine 318 is modified (N6-(retinylidene)lysine). The Cytoplasmic portion of the chain corresponds to 324 to 371 (DPYVYAISHPKYRLELQKRLPWLELQEKPISDSTSTTTETVNTPPASS).

This sequence belongs to the G-protein coupled receptor 1 family. Opsin subfamily. Post-translationally, phosphorylated on some or all of the serine and threonine residues present in the C-terminal region. In terms of tissue distribution, expressed in the dorsal region of the retina.

Its subcellular location is the membrane. Its function is as follows. Visual pigments are the light-absorbing molecules that mediate vision. They consist of an apoprotein, opsin, covalently linked to 11-cis-retinal. The polypeptide is Opsin, ultraviolet-sensitive (UVOP) (Apis mellifera (Honeybee)).